Here is a 564-residue protein sequence, read N- to C-terminus: 5-aminolevulinate synthase, mitochondrial (564 aa).

The transit peptide at 1–57 (MESITKVSMSVCPFVRSTSTQALRQLSQTSGALANQARQCPIAGNAIRAKEISIRSY) directs the protein to the mitochondrion. Substrate-binding residues include Arg-113, Ser-226, and Lys-245. The pyridoxal 5'-phosphate site is built by Ser-278, His-306, and Thr-350. Lys-353 is a catalytic residue. N6-(pyridoxal phosphate)lysine is present on Lys-353. The pyridoxal 5'-phosphate site is built by Thr-382 and Thr-383. Residue Thr-468 coordinates substrate.

The protein belongs to the class-II pyridoxal-phosphate-dependent aminotransferase family. In terms of assembly, homodimer. Pyridoxal 5'-phosphate is required as a cofactor.

It is found in the mitochondrion matrix. The enzyme catalyses succinyl-CoA + glycine + H(+) = 5-aminolevulinate + CO2 + CoA. Its pathway is porphyrin-containing compound metabolism; protoporphyrin-IX biosynthesis; 5-aminolevulinate from glycine: step 1/1. In terms of biological role, catalyzes the synthesis of 5-aminolevulinate (ALA) from succinyl-CoA and glycine, the first and rate-limiting step in heme biosynthesis. The sequence is that of 5-aminolevulinate synthase, mitochondrial (HEM1) from Candida albicans (strain SC5314 / ATCC MYA-2876) (Yeast).